Reading from the N-terminus, the 154-residue chain is Troponin C, isoallergen Bla g 6.0301 (154 aa).

4 consecutive EF-hand domains span residues 11–46 (EQISVLRKAFDAFDREKSGSISTNMVEEILRLMGQP), 47–82 (FNRRTLEELIDEVDADKSGRLEFDEFVTLAAKFIIE), 87–122 (AMEKELREAFRLYDKEGNGYIPTSCLREILRELDEQ), and 123–154 (LTSDELDMMIEEIDADGSGTVDFDEFMEMMTG). The Ca(2+) site is built by D60, D62, S64, R66, and E71. Residues D136, D138, S140, T142, and E147 each contribute to the Ca(2+) site.

The protein belongs to the troponin C family.

Troponin is the central regulatory protein of striated muscle contraction. It consists of three components: Troponin-I (Tn-I) which is the inhibitor of actomyosin ATPase, Troponin-T (Tn-T) which contains the binding site for tropomyosin and Troponin-C (Tn-C). The binding of calcium to Tn-C abolishes the inhibitory action of Tn on actin filaments. The polypeptide is Troponin C, isoallergen Bla g 6.0301 (Blattella germanica (German cockroach)).